The sequence spans 412 residues: Probable cystathionine gamma-synthase 2 (412 aa).

Pyridoxal 5'-phosphate contacts are provided by Tyr76, Arg78, Gly106, Met107, Tyr131, Ser226, and Thr228. Lys229 carries the post-translational modification N6-(pyridoxal phosphate)lysine.

The protein belongs to the trans-sulfuration enzymes family. Pyridoxal 5'-phosphate is required as a cofactor.

The catalysed reaction is O-phospho-L-homoserine + L-cysteine = L,L-cystathionine + phosphate. The enzyme catalyses O-succinyl-L-homoserine + L-cysteine = L,L-cystathionine + succinate + H(+). Its pathway is amino-acid biosynthesis; L-methionine biosynthesis via de novo pathway; L-cystathionine from O-succinyl-L-homoserine: step 1/1. Its function is as follows. Catalyzes the first committed step of methionine (Met) biosynthesis. Catalyzes the formation of L-cystathionine from homoserine esters and L-cysteine, via a gamma-replacement reaction. In Arabidopsis thaliana (Mouse-ear cress), this protein is Probable cystathionine gamma-synthase 2.